An 803-amino-acid polypeptide reads, in one-letter code: MGVGLCGRGIVAKPRLYEVASDLGTDSKTLMGILREMGEFVKSPSSALEPPVVRKLAKAFAEKYPDKVEEKKEHTPPAPVVETPKAPPPLPRPIIRHAVRGVPSGAPRPGNNPYAPRQGMGQLATPGPATKRPVKFKAEGDKKPASTHRRVPAPLPQKRTPLRGRGAPGAFGRGNKPKSRKSKTLKRQEFEMRDAPVIGGVTIPRGDGRVIRLMQGASVTDFAEKIDVLPANLLSVLFHLGEMATATESLDEATFEILAEEIGYKVQIVSPDDEDRALLESFSVNLAAEHAEDSELDLAIRPPVVTIMGHVDHGKTLLLDTIRNTNTLAEESGGITQHIGAYQVSVGDRFVTFIDTPGHEAFTAMRARGAKVTDIAVLVVAADDGIMPQTIEALDHARSADVPIVVAVNKIDKEGANPAKIRQQMTEFDVIPEEYGGDVMFIDISAKTGQGVDALLEAILLTADAALELRANPDRTARGVTIEAKLDAGRGAVATVLVQSGTLRVGDRVVTGCAYGRVRAMVDENGLPVESAPPSRPVRVQGLSSVPKAGDSFIVVAEDRQARQIAEKREANERNAQLAKSRKRVSLEDFTRAIQEGRVQSLNMIIKGDVSGAVEALEESLSKLDVGEEVSLRIIHRGVGAITESDVNLATVDNAVVIGFNVRPDRKARDRAAREGVDVRFYSVIYDAIEDIEKSLKGLLKPELEERKLGLAIVKEVFHSSRVGTIAGCSVESGSITRNAKARLIRDGVVVVSDLTVTSLRRFKDDVTEVKSGFECGVGLGSCDDIRIGDEIETIQIVEKPRA.

A compositionally biased stretch (basic and acidic residues) spans 65–75 (PDKVEEKKEHT). The segment at 65–186 (PDKVEEKKEH…PKSRKSKTLK (122 aa)) is disordered. Basic residues predominate over residues 175–185 (NKPKSRKSKTL). The region spanning 300–468 (IRPPVVTIMG…ILLTADAALE (169 aa)) is the tr-type G domain. The tract at residues 309-316 (GHVDHGKT) is G1. Position 309–316 (309–316 (GHVDHGKT)) interacts with GTP. The G2 stretch occupies residues 334–338 (GITQH). The G3 stretch occupies residues 355-358 (DTPG). GTP is bound by residues 355–359 (DTPGH) and 409–412 (NKID). The segment at 409-412 (NKID) is G4. A G5 region spans residues 445–447 (SAK).

This sequence belongs to the TRAFAC class translation factor GTPase superfamily. Classic translation factor GTPase family. IF-2 subfamily.

The protein resides in the cytoplasm. One of the essential components for the initiation of protein synthesis. Protects formylmethionyl-tRNA from spontaneous hydrolysis and promotes its binding to the 30S ribosomal subunits. Also involved in the hydrolysis of GTP during the formation of the 70S ribosomal complex. In Tropheryma whipplei (strain TW08/27) (Whipple's bacillus), this protein is Translation initiation factor IF-2.